The following is a 153-amino-acid chain: Ribosome maturation factor RimP (153 aa).

It belongs to the RimP family.

Its subcellular location is the cytoplasm. In terms of biological role, required for maturation of 30S ribosomal subunits. The chain is Ribosome maturation factor RimP from Nostoc punctiforme (strain ATCC 29133 / PCC 73102).